Here is a 452-residue protein sequence, read N- to C-terminus: 23S rRNA (uracil(1939)-C(5))-methyltransferase RlmD (452 aa).

The tract at residues 1–25 is disordered; sequence MSKKKSNSGLRFQPAGGNRTPQVPV. The TRAM domain maps to 22–80; it reads QVPVGKKQRLDIERLAGDGRGIAFLDGRTWFVSGALAGEAVEARVLNARGKVVEARLER. 4 residues coordinate [4Fe-4S] cluster: Cys93, Cys99, Cys102, and Cys181. Residues Gln285, Phe314, Asn319, Glu335, Asp362, and Asp383 each contribute to the S-adenosyl-L-methionine site. Catalysis depends on Cys409, which acts as the Nucleophile.

This sequence belongs to the class I-like SAM-binding methyltransferase superfamily. RNA M5U methyltransferase family. RlmD subfamily.

It catalyses the reaction uridine(1939) in 23S rRNA + S-adenosyl-L-methionine = 5-methyluridine(1939) in 23S rRNA + S-adenosyl-L-homocysteine + H(+). Functionally, catalyzes the formation of 5-methyl-uridine at position 1939 (m5U1939) in 23S rRNA. The chain is 23S rRNA (uracil(1939)-C(5))-methyltransferase RlmD from Pseudomonas putida (strain ATCC 47054 / DSM 6125 / CFBP 8728 / NCIMB 11950 / KT2440).